A 326-amino-acid chain; its full sequence is Lipoyl synthase (326 aa).

Cys-74, Cys-79, Cys-85, Cys-100, Cys-104, Cys-107, and Ser-314 together coordinate [4Fe-4S] cluster. The region spanning 85 to 303 is the Radical SAM core domain; sequence CFGRGTATFM…EEEAYKMGFS (219 aa).

Belongs to the radical SAM superfamily. Lipoyl synthase family. Requires [4Fe-4S] cluster as cofactor.

The protein resides in the cytoplasm. The enzyme catalyses [[Fe-S] cluster scaffold protein carrying a second [4Fe-4S](2+) cluster] + N(6)-octanoyl-L-lysyl-[protein] + 2 oxidized [2Fe-2S]-[ferredoxin] + 2 S-adenosyl-L-methionine + 4 H(+) = [[Fe-S] cluster scaffold protein] + N(6)-[(R)-dihydrolipoyl]-L-lysyl-[protein] + 4 Fe(3+) + 2 hydrogen sulfide + 2 5'-deoxyadenosine + 2 L-methionine + 2 reduced [2Fe-2S]-[ferredoxin]. It participates in protein modification; protein lipoylation via endogenous pathway; protein N(6)-(lipoyl)lysine from octanoyl-[acyl-carrier-protein]: step 2/2. Its function is as follows. Catalyzes the radical-mediated insertion of two sulfur atoms into the C-6 and C-8 positions of the octanoyl moiety bound to the lipoyl domains of lipoate-dependent enzymes, thereby converting the octanoylated domains into lipoylated derivatives. The chain is Lipoyl synthase from Acidovorax ebreus (strain TPSY) (Diaphorobacter sp. (strain TPSY)).